A 319-amino-acid polypeptide reads, in one-letter code: MANRSHHNAGHRAMNALRKSGQKHSSESQLGSSEIGTTRHVYDVCDCLDTLAKLPDDSVQLIICDPPYNIMLADWDDHMDYIGWAKRWLAEAERVLSPTGSIAIFGGLQYQGEAGSGDLISIISHMRQNSKMLLANLIIWNYPNGMSAQRFFANRHEEIAWFAKTKKYFFDLDAVREPYDEETKAAYMKDKRLNPESVEKGRNPTNVWRMSRLNGNSLERVGHPTQKPAAVIERLVRALSHPGSTVLDFFAGSGVTARVAIQEGRNSICTDAAPVFKEYYQKQLTFLQDDGLIDKARSYEIVEGAANFGAALQRGDVAS.

Basic residues predominate over residues 1–10 (MANRSHHNAG). The tract at residues 1 to 32 (MANRSHHNAGHRAMNALRKSGQKHSSESQLGS) is disordered.

It belongs to the N(4)/N(6)-methyltransferase family.

It carries out the reaction a 2'-deoxyadenosine in DNA + S-adenosyl-L-methionine = an N(6)-methyl-2'-deoxyadenosine in DNA + S-adenosyl-L-homocysteine + H(+). With respect to regulation, strongly inhibited by N-ethylmaleimide, inactivated by MgCl(2) or MgSO(4). Its function is as follows. A beta subtype methylase, recognizes the double-stranded sequence 5'-GAATTC-3', methylates A-3 on both strands, and protects the DNA from cleavage by the RsrI endonuclease. The polypeptide is Type II methyltransferase M.RsrI (Cereibacter sphaeroides (Rhodobacter sphaeroides)).